We begin with the raw amino-acid sequence, 123 residues long: Glycine cleavage system H protein (123 aa).

The 82-residue stretch at 23-104 folds into the Lipoyl-binding domain; that stretch reads HWLAGITDHA…PYDAWIFSFE (82 aa). The residue at position 64 (Lys64) is an N6-lipoyllysine.

This sequence belongs to the GcvH family. The glycine cleavage system is composed of four proteins: P, T, L and H. The cofactor is (R)-lipoate.

The glycine cleavage system catalyzes the degradation of glycine. The H protein shuttles the methylamine group of glycine from the P protein to the T protein. This is Glycine cleavage system H protein from Methylobacillus flagellatus (strain ATCC 51484 / DSM 6875 / VKM B-1610 / KT).